The sequence spans 497 residues: MTNINVRNYIDESYGLFINNEFQASDSGETLTVSNPANGEDLAKVARAGKKDVDKAVQAAHDAFDSWSKISKEERADYLLEISRRIHEKTEHLATVESLQNGKPYRETSTIDVPQAANQFKYFASVLTTDEGSVNEIDQNTMSLVVNEPVGVVGAVVAWNFPILLASWKLGPALAAGNTVVIQPSSSTPLSLIELAKIFQEVLPKGVVNVLTGKGSESGDAIFHHEGVDKLSFTGSTDVGYGVAQAGAERIVPTTLELGGKSANIIFDDANLEQVIEGVQLGILFNQGEVCSAGSRLLVQSSIYDELLPKLKEAFENIKVGDPFDEDTKMSAQTGPEQLDKIESYIKIAEEDDKANILTGGHRITDNGLDKGYFFEPTIIEINDNKHQLAQEEIFGPVVVVEKFDDEQEAIEIANDSEYGLAGGIFTTDIHRALNVAKAMRTGRIWINTYNQIPAGAPFGGYKKSGIGREVYKDAIKNYQQVKNIFIDTSNQTKGLY.

213–219 (GKGSESG) provides a ligand contact to NAD(+). Active-site residues include Glu257 and Cys291.

Belongs to the aldehyde dehydrogenase family.

It carries out the reaction an aldehyde + NAD(+) + H2O = a carboxylate + NADH + 2 H(+). The chain is Putative aldehyde dehydrogenase AldA (aldA) from Staphylococcus epidermidis (strain ATCC 35984 / DSM 28319 / BCRC 17069 / CCUG 31568 / BM 3577 / RP62A).